The primary structure comprises 125 residues: Inner membrane protein YbjM (125 aa).

Residues 1–6 lie on the Cytoplasmic side of the membrane; the sequence is MKHKQR. Residues 7 to 27 form a helical membrane-spanning segment; it reads WAGAICCFVLFIVVCLFLATH. The Periplasmic portion of the chain corresponds to 28–34; it reads MKGAFRA. The helical transmembrane segment at 35 to 55 threads the bilayer; sequence AGHPEIGLLFFILPGAVASFF. Residues 56–64 are Cytoplasmic-facing; the sequence is SQRREVLKP. Residues 65-85 form a helical membrane-spanning segment; it reads LFGAMLAAPCSMLIMRLFFSP. The Periplasmic portion of the chain corresponds to 86–92; sequence TRSFWQE. The chain crosses the membrane as a helical span at residues 93-113; sequence LAWLLSAVFWCALGALCFLFI. At 114–125 the chain is on the cytoplasmic side; it reads SSLFKPQHRKNQ.

The protein localises to the cell inner membrane. This is Inner membrane protein YbjM (ybjM) from Escherichia coli O157:H7.